The following is a 607-amino-acid chain: Threonine--tRNA ligase (607 aa).

The editing domain stretch occupies residues 1–143; sequence MRVLYIHAER…SFKPEEARVA (143 aa). Catalytic stretches follow at residues 193–489 and 194–489; these read PRYL…PRLP and RYLD…PRLP. Positions 286, 337, and 458 each coordinate Zn(2+).

It belongs to the class-II aminoacyl-tRNA synthetase family. Homodimer. The cofactor is Zn(2+).

It is found in the cytoplasm. It carries out the reaction tRNA(Thr) + L-threonine + ATP = L-threonyl-tRNA(Thr) + AMP + diphosphate + H(+). Functionally, catalyzes the attachment of threonine to tRNA(Thr) in a two-step reaction: L-threonine is first activated by ATP to form Thr-AMP and then transferred to the acceptor end of tRNA(Thr). Also edits incorrectly charged L-seryl-tRNA(Thr). The chain is Threonine--tRNA ligase from Pyrobaculum calidifontis (strain DSM 21063 / JCM 11548 / VA1).